A 249-amino-acid polypeptide reads, in one-letter code: MVKLTADLIWKSPHFFNAIKERELDLRGNKIPVIENLGATEDQFDTIDLSDNEIVKLENFPYLNRLGTLLINNNRITRINPNLGEFLPKLHSLVLTNNRLVNLVEIDPLASIPKLQYLSLLDNNITKKANYRLYVIHKLKSLRVLDFIKIKAKERAEAASLFSSKEAEEEVKKVSREEVKKVSETAENPETPKVVAPTAEQILAIKAAIINSQTIEEIARLEQALKFGQVPAGLIIPDPATNDSAPMEE.

LRR repeat units lie at residues 20–41 (KERE…GATE), 43–64 (QFDT…PYLN), 65–87 (RLGT…GEFL), and 89–110 (KLHS…DPLA). Residues 123–161 (NNITKKANYRLYVIHKLKSLRVLDFIKIKAKERAEAASL) form the LRRCT domain.

It belongs to the U2 small nuclear ribonucleoprotein A family.

The protein resides in the nucleus. The protein localises to the nucleus speckle. Functionally, this protein is associated with sn-RNP U2. It helps the A' protein to bind stem loop IV of U2 snRNA. This is U2 small nuclear ribonucleoprotein A' from Arabidopsis thaliana (Mouse-ear cress).